The sequence spans 209 residues: Uracil phosphoribosyltransferase (209 aa).

Residues Arg-79, Arg-104, and 131 to 139 (DPMLATGGS) contribute to the 5-phospho-alpha-D-ribose 1-diphosphate site. Uracil-binding positions include Ile-194 and 199 to 201 (GDA). Residue Asp-200 participates in 5-phospho-alpha-D-ribose 1-diphosphate binding.

This sequence belongs to the UPRTase family. Requires Mg(2+) as cofactor.

The catalysed reaction is UMP + diphosphate = 5-phospho-alpha-D-ribose 1-diphosphate + uracil. It participates in pyrimidine metabolism; UMP biosynthesis via salvage pathway; UMP from uracil: step 1/1. Allosterically activated by GTP. In terms of biological role, catalyzes the conversion of uracil and 5-phospho-alpha-D-ribose 1-diphosphate (PRPP) to UMP and diphosphate. This chain is Uracil phosphoribosyltransferase, found in Clostridium beijerinckii (strain ATCC 51743 / NCIMB 8052) (Clostridium acetobutylicum).